Consider the following 307-residue polypeptide: tRNA pseudouridine synthase B (307 aa).

D39 serves as the catalytic Nucleophile.

The protein belongs to the pseudouridine synthase TruB family. Type 1 subfamily.

It catalyses the reaction uridine(55) in tRNA = pseudouridine(55) in tRNA. Responsible for synthesis of pseudouridine from uracil-55 in the psi GC loop of transfer RNAs. The chain is tRNA pseudouridine synthase B from Lactiplantibacillus plantarum (strain ATCC BAA-793 / NCIMB 8826 / WCFS1) (Lactobacillus plantarum).